The sequence spans 268 residues: Shikimate dehydrogenase (NADP(+)) (268 aa).

Residues 15–17 (SKS) and Thr60 contribute to the shikimate site. Residue Lys64 is the Proton acceptor of the active site. The shikimate site is built by Asn85 and Asp101. Residues 121–125 (GAGGS) and Leu208 contribute to the NADP(+) site. Tyr210 serves as a coordination point for shikimate. Gly230 is an NADP(+) binding site.

The protein belongs to the shikimate dehydrogenase family. As to quaternary structure, homodimer.

The enzyme catalyses shikimate + NADP(+) = 3-dehydroshikimate + NADPH + H(+). It participates in metabolic intermediate biosynthesis; chorismate biosynthesis; chorismate from D-erythrose 4-phosphate and phosphoenolpyruvate: step 4/7. Functionally, involved in the biosynthesis of the chorismate, which leads to the biosynthesis of aromatic amino acids. Catalyzes the reversible NADPH linked reduction of 3-dehydroshikimate (DHSA) to yield shikimate (SA). This chain is Shikimate dehydrogenase (NADP(+)), found in Helicobacter hepaticus (strain ATCC 51449 / 3B1).